We begin with the raw amino-acid sequence, 132 residues long: Small ribosomal subunit protein uS8 (132 aa).

This sequence belongs to the universal ribosomal protein uS8 family. As to quaternary structure, part of the 30S ribosomal subunit. Contacts proteins S5 and S12.

One of the primary rRNA binding proteins, it binds directly to 16S rRNA central domain where it helps coordinate assembly of the platform of the 30S subunit. The polypeptide is Small ribosomal subunit protein uS8 (Acetivibrio thermocellus (strain ATCC 27405 / DSM 1237 / JCM 9322 / NBRC 103400 / NCIMB 10682 / NRRL B-4536 / VPI 7372) (Clostridium thermocellum)).